The chain runs to 765 residues: Probable ATP-dependent RNA helicase DDX27 (765 aa).

The segment at 1 to 48 is disordered; sequence MLSELGFIRTIGEDEDVQVEPETDSEDEEEEGPIVLGRKQKALQKNRS. Residues 13 to 32 are compositionally biased toward acidic residues; the sequence is EDEDVQVEPETDSEDEEEEG. Phosphoserine occurs at positions 25 and 48. The Required for interaction with the PEBOW complex motif lies at 55–57; that stretch reads FVF. The interval 88–148 is disordered; sequence EKIEKVRKKR…ESETDYSSAD (61 aa). A compositionally biased stretch (basic and acidic residues) spans 98–119; sequence KTEDKEAKSGKSEKEKEAKEGS. Phosphoserine is present on residues Ser135 and Ser146. The short motif at 164 to 169 is the Nuclear localization signal element; it reads KKKKKK. A Q motif motif is present at residues 187 to 215; it reads LSFQDMNLSRPLLKAITAMGFKQPTPIQK. Residues 218–392 enclose the Helicase ATP-binding domain; the sequence is IPVGLLGKDI…SVSLKNPVRI (175 aa). 231-238 contributes to the ATP binding site; it reads AATGTGKT. The DEAD box motif lies at 340 to 343; the sequence is DEAD. The Helicase C-terminal domain maps to 426–572; sequence LLMRTFTDHV…DVILKFRDKI (147 aa). 2 stretches are compositionally biased toward basic residues: residues 685-694 and 744-765; these read KRNRRAKRAR and LGLP…KRRK. A disordered region spans residues 685–765; that stretch reads KRNRRAKRAR…KSKSRYKRRK (81 aa).

The protein belongs to the DEAD box helicase family. DDX27/DRS1 subfamily. In terms of assembly, associates with PeBoW complex, composed of BOP1, PES1 and WDR12. Interacts directly with BOP1 and PES1.

It is found in the nucleus. Its subcellular location is the nucleolus. The protein resides in the chromosome. It catalyses the reaction ATP + H2O = ADP + phosphate + H(+). Functionally, probable ATP-dependent RNA helicase. Component of the nucleolar ribosomal RNA (rRNA) processing machinery that regulates 3' end formation of ribosomal 47S rRNA. This chain is Probable ATP-dependent RNA helicase DDX27 (DDX27), found in Bos taurus (Bovine).